Here is a 303-residue protein sequence, read N- to C-terminus: Hemolysin E (303 aa).

A disulfide bridge links Cys-87 with Cys-285. The chain crosses the membrane as a helical span at residues 179-199; sequence AGAAAGIVAGPFGLIISYSIA.

The protein belongs to the hemolysin E family. In terms of assembly, monomer and oligomer. In periplasm, it is present as a monomer, while in outer membrane vesicles, it oligomerizes to form a pore structure that is active. The pore is formed by a dodecamer. In periplasm, it forms a disulfide bond, which prevents the oligomerization. In outer membrane vesicles, the redox status prevents formation of the disulfide bond, leading to oligomerization and pore formation.

The protein resides in the secreted. It is found in the periplasm. Its subcellular location is the host cell membrane. Functionally, toxin, which has some hemolytic activity towards mammalian cells. Acts by forming a pore-like structure upon contact with mammalian cells. The polypeptide is Hemolysin E (hlyE) (Salmonella paratyphi A (strain ATCC 9150 / SARB42)).